Reading from the N-terminus, the 323-residue chain is Small ribosomal subunit protein uS9m (323 aa).

The interval 298 to 323 is disordered; the sequence is TRDARKVERKKPGKVKARKSPTWVKR. The span at 304-323 shows a compositional bias: basic residues; the sequence is VERKKPGKVKARKSPTWVKR.

The protein belongs to the universal ribosomal protein uS9 family.

It localises to the mitochondrion. This Debaryomyces hansenii (strain ATCC 36239 / CBS 767 / BCRC 21394 / JCM 1990 / NBRC 0083 / IGC 2968) (Yeast) protein is Small ribosomal subunit protein uS9m (MRPS9).